Here is a 1025-residue protein sequence, read N- to C-terminus: Multidrug resistance protein MdtC (1025 aa).

12 helical membrane-spanning segments follow: residues 3 to 23, 333 to 353, 360 to 380, 387 to 407, 431 to 451, 463 to 483, 528 to 548, 853 to 873, 875 to 895, 897 to 917, 953 to 973, and 984 to 1004; these read FFAL…AITL, EVEQ…FLFL, IIPA…MYLC, LSLM…IVVL, VGFT…PLLL, FAVT…TLTP, LVGV…ISIP, VILI…LYES, VHPL…LLAL, LFNA…IGIV, PIMM…LSGG, and ITIV…TPVV.

The protein belongs to the resistance-nodulation-cell division (RND) (TC 2.A.6) family. MdtC subfamily. In terms of assembly, part of a tripartite efflux system composed of MdtA, MdtB and MdtC. MdtC forms a heteromultimer with MdtB.

It is found in the cell inner membrane. In terms of biological role, the MdtABC tripartite complex confers resistance against novobiocin and deoxycholate. The chain is Multidrug resistance protein MdtC from Escherichia coli O139:H28 (strain E24377A / ETEC).